The primary structure comprises 122 residues: Glycine cleavage system H protein (122 aa).

Positions 19 to 101 (TATIGITKHA…EGNSWLYKIK (83 aa)) constitute a Lipoyl-binding domain. K60 is modified (N6-lipoyllysine).

The protein belongs to the GcvH family. The glycine cleavage system is composed of four proteins: P, T, L and H. It depends on (R)-lipoate as a cofactor.

The glycine cleavage system catalyzes the degradation of glycine. The H protein shuttles the methylamine group of glycine from the P protein to the T protein. The sequence is that of Glycine cleavage system H protein from Dinoroseobacter shibae (strain DSM 16493 / NCIMB 14021 / DFL 12).